Consider the following 122-residue polypeptide: Large ribosomal subunit protein bL20 (122 aa).

The protein belongs to the bacterial ribosomal protein bL20 family.

Its function is as follows. Binds directly to 23S ribosomal RNA and is necessary for the in vitro assembly process of the 50S ribosomal subunit. It is not involved in the protein synthesizing functions of that subunit. The chain is Large ribosomal subunit protein bL20 from Saccharopolyspora erythraea (strain ATCC 11635 / DSM 40517 / JCM 4748 / NBRC 13426 / NCIMB 8594 / NRRL 2338).